The primary structure comprises 597 residues: Aspartate--tRNA(Asp/Asn) ligase (597 aa).

Glutamate 175 lines the L-aspartate pocket. An aspartate region spans residues 199–202 (QQYK). L-aspartate contacts are provided by arginine 221 and histidine 454. Residue 221–223 (RDE) coordinates ATP. Glutamate 488 serves as a coordination point for ATP. L-aspartate is bound at residue arginine 495. 540-543 (GVDR) is an ATP binding site.

The protein belongs to the class-II aminoacyl-tRNA synthetase family. Type 1 subfamily. In terms of assembly, homodimer.

The protein localises to the cytoplasm. The enzyme catalyses tRNA(Asx) + L-aspartate + ATP = L-aspartyl-tRNA(Asx) + AMP + diphosphate. Functionally, aspartyl-tRNA synthetase with relaxed tRNA specificity since it is able to aspartylate not only its cognate tRNA(Asp) but also tRNA(Asn). Reaction proceeds in two steps: L-aspartate is first activated by ATP to form Asp-AMP and then transferred to the acceptor end of tRNA(Asp/Asn). This chain is Aspartate--tRNA(Asp/Asn) ligase, found in Bartonella quintana (strain Toulouse) (Rochalimaea quintana).